The sequence spans 293 residues: uncharacterized protein (293 aa).

Helical transmembrane passes span 55-75 (FLLCLGLVLAFPHLKGTVFLC), 77-97 (TGFMPPLSLMVPTICLALLHG), 110-130 (PGLLTIYSVLTTLSVIVASAC), 138-158 (FSGLLACVLFSLCSCVTGLAG), 164-184 (WQVIVTLFVIGVIAFLIALYL), 193-213 (LFLGYYAMALSFMLVVTVFDT), and 226-246 (LLTLCLYENLVYLYLLILILF). A glycan (N-linked (GlcNAc...) asparagine; by host) is linked at asparagine 287.

Belongs to the cytomegalovirus US12 family.

It localises to the membrane. This is an uncharacterized protein from Human cytomegalovirus (strain AD169) (HHV-5).